A 528-amino-acid chain; its full sequence is MQATKSQALFVNFLGNSPKWYKYAIMAFLVINPLLFFYVSPFVAGWVLVVEFIFTLAMALKCYPLQPGGLLAIQAVFIGMTSPSQVLHEIEANLEVLLLLVFMVAGIYFMKQLLLFVFTKMITKVRSKIIVSLMFCTASAFLSAFLDALTVIAVIIAVAVGFYSIYHKVASGKSFNDGHDHTSETTEQLNNEELEAFRAFLRNLLMHSGIGTALGGVCTMVGEPQNLIIAAQAHWQFGEFFLRMSPVTMPVLVAGIFTCFLVEKFKVFGYGAQLPGAVHKILTDYANHEDSHRTNQDKMKLVVQALIGVWLIAGLALHLASVGLIGLSVIILATAFNGITDEHSLGKAFEEALPFTALLAVFFAIVGVIIDQELFAPVIQWALGYEGNMQLVIFYIANGLLSMVSDNVFVGTVYINEVKAALMSGQITRDQFDLLAVAINTGTNLPSVATPNGQAAFLFLLTSAIAPLIRLSYGRMVWMALPYTIVLSIVGVMAIESGFLVDMTDVLYETQLIIHHSAKDISGAVMGH.

10 helical membrane passes run F28–V50, P67–L87, L98–F118, A140–V160, F240–F260, A305–I325, E350–I370, L391–G411, A449–I469, and M476–E496.

It belongs to the NhaB Na(+)/H(+) (TC 2.A.34) antiporter family.

It localises to the cell inner membrane. It catalyses the reaction 2 Na(+)(in) + 3 H(+)(out) = 2 Na(+)(out) + 3 H(+)(in). Functionally, na(+)/H(+) antiporter that extrudes sodium in exchange for external protons. This Shewanella frigidimarina (strain NCIMB 400) protein is Na(+)/H(+) antiporter NhaB.